We begin with the raw amino-acid sequence, 120 residues long: Piercer of microtubule wall 2 protein (120 aa).

Over residues 1–10 the composition is skewed to basic and acidic residues; that stretch reads MTECDWEKKS. A disordered region spans residues 1-25; sequence MTECDWEKKSTSASNSDTEMKPELP.

Belongs to the PIERCE2 family. Microtubule inner protein component of sperm flagellar doublet microtubules. Interacts with CFAP53, ODAD1 and ODAD3; the interactions link the outer dynein arms docking complex (ODA-DC) to the internal microtubule inner proteins (MIP) in cilium axoneme. Expressed in trachea multiciliated cells.

It localises to the cytoplasm. The protein resides in the cytoskeleton. Its subcellular location is the cilium axoneme. It is found in the flagellum axoneme. Microtubule inner protein involved in the attachment of outer dynein arms (ODAs) to dynein-decorated doublet microtubules (DMTs) in cilia axoneme, which is required for motile cilia beating. The chain is Piercer of microtubule wall 2 protein (PIERCE2) from Bos taurus (Bovine).